Here is a 109-residue protein sequence, read N- to C-terminus: Mitochondrial pyruvate carrier 1 (109 aa).

Residue Ala-2 is modified to N-acetylalanine. Residues 2 to 20 (AGALVRKAADYVRSKDFRD) lie on the Mitochondrial matrix side of the membrane. The helical transmembrane segment at 21-41 (YLMSTHFWGPVANWGLPIAAI) threads the bilayer. Residues 42–52 (NDMKKSPEIIS) lie on the Mother cell cytoplasmic side of the membrane. The helical transmembrane segment at 53–71 (GRMTFALCCYSLTFMRFAY) threads the bilayer. Lys-72 is modified (N6-acetyllysine). Over 72–109 (KVQPRNWLLFACHATNEVAQLIQGGRLIRHEMSKKASA) the chain is Mitochondrial matrix.

In terms of assembly, homodimer. Forms heterodimer with MPC2. The heterodimer is the more stable and dominant form.

It localises to the mitochondrion inner membrane. It catalyses the reaction pyruvate(out) + H(+)(out) = pyruvate(in) + H(+)(in). Mediates the uptake of pyruvate into mitochondria. The protein is Mitochondrial pyruvate carrier 1 (MPC1) of Bos taurus (Bovine).